A 591-amino-acid polypeptide reads, in one-letter code: Aspartate--tRNA(Asp/Asn) ligase (591 aa).

E175 serves as a coordination point for L-aspartate. Residues 199 to 202 are aspartate; that stretch reads QQYK. L-aspartate contacts are provided by R221 and H450. 221 to 223 is a binding site for ATP; that stretch reads RDE. E484 provides a ligand contact to ATP. An L-aspartate-binding site is contributed by R491. 536–539 is a binding site for ATP; the sequence is GVDR.

The protein belongs to the class-II aminoacyl-tRNA synthetase family. Type 1 subfamily. In terms of assembly, homodimer.

It localises to the cytoplasm. It carries out the reaction tRNA(Asx) + L-aspartate + ATP = L-aspartyl-tRNA(Asx) + AMP + diphosphate. Aspartyl-tRNA synthetase with relaxed tRNA specificity since it is able to aspartylate not only its cognate tRNA(Asp) but also tRNA(Asn). Reaction proceeds in two steps: L-aspartate is first activated by ATP to form Asp-AMP and then transferred to the acceptor end of tRNA(Asp/Asn). The protein is Aspartate--tRNA(Asp/Asn) ligase of Rhodopseudomonas palustris (strain ATCC BAA-98 / CGA009).